Here is a 139-residue protein sequence, read N- to C-terminus: Ribulose bisphosphate carboxylase small subunit (139 aa).

The protein belongs to the RuBisCO small chain family. In terms of assembly, heterohexadecamer of 8 large and 8 small subunits.

Its subcellular location is the plastid. It localises to the chloroplast. Its function is as follows. RuBisCO catalyzes two reactions: the carboxylation of D-ribulose 1,5-bisphosphate, the primary event in carbon dioxide fixation, as well as the oxidative fragmentation of the pentose substrate in the photorespiration process. Both reactions occur simultaneously and in competition at the same active site. Although the small subunit is not catalytic it is essential for maximal activity. The sequence is that of Ribulose bisphosphate carboxylase small subunit from Chrysotila carterae (Marine alga).